A 486-amino-acid polypeptide reads, in one-letter code: Cobyric acid synthase (486 aa).

Positions 248-435 (VLNVVVPVLP…LHGLFESPAA (188 aa)) constitute a GATase cobBQ-type domain. The Nucleophile role is filled by Cys-329. The active site involves His-427.

This sequence belongs to the CobB/CobQ family. CobQ subfamily.

Its pathway is cofactor biosynthesis; adenosylcobalamin biosynthesis. Its function is as follows. Catalyzes amidations at positions B, D, E, and G on adenosylcobyrinic A,C-diamide. NH(2) groups are provided by glutamine, and one molecule of ATP is hydrogenolyzed for each amidation. The polypeptide is Cobyric acid synthase (Pseudomonas syringae pv. syringae (strain B728a)).